The sequence spans 479 residues: Altronate oxidoreductase (479 aa).

18–29 (IIQFGEGNFLRA) lines the NAD(+) pocket.

Belongs to the mannitol dehydrogenase family. UxaB subfamily.

It carries out the reaction D-altronate + NAD(+) = keto-D-tagaturonate + NADH + H(+). It functions in the pathway carbohydrate metabolism; pentose and glucuronate interconversion. The protein is Altronate oxidoreductase of Bacteroides thetaiotaomicron (strain ATCC 29148 / DSM 2079 / JCM 5827 / CCUG 10774 / NCTC 10582 / VPI-5482 / E50).